The sequence spans 392 residues: Phosphoglycerate kinase (392 aa).

Residues 21-23 (DFN), Arg36, 59-62 (HLGR), Arg118, and Arg151 contribute to the substrate site. ATP-binding positions include Lys201, Gly292, Glu323, and 349 to 352 (GGDS).

It belongs to the phosphoglycerate kinase family. Monomer.

It is found in the cytoplasm. The catalysed reaction is (2R)-3-phosphoglycerate + ATP = (2R)-3-phospho-glyceroyl phosphate + ADP. The protein operates within carbohydrate degradation; glycolysis; pyruvate from D-glyceraldehyde 3-phosphate: step 2/5. In Borrelia hermsii (strain HS1 / DAH), this protein is Phosphoglycerate kinase.